The sequence spans 327 residues: HTH-type transcriptional regulator EbgR (327 aa).

One can recognise an HTH lacI-type domain in the interval 1–57; the sequence is MATLKDIAIEAGVSLATVSRVLNDDPTLNVKEETKHRILEIAEKLEYKTSSARKLQT. The segment at residues 4–23 is a DNA-binding region (H-T-H motif); that stretch reads LKDIAIEAGVSLATVSRVLN.

Its function is as follows. Repressor for beta galactosidase alpha and beta subunits (ebgA and ebgC). Binds lactose as an inducer. The chain is HTH-type transcriptional regulator EbgR (ebgR) from Escherichia coli (strain K12).